The chain runs to 310 residues: ADP-L-glycero-D-manno-heptose-6-epimerase (310 aa).

NADP(+) is bound by residues F10–I11, D31–N32, K38, K53, E75–S79, and N92. The active-site Proton acceptor is Y140. K144 contacts NADP(+). Residue N169 participates in substrate binding. Residues V170 and K178 each contribute to the NADP(+) site. K178 serves as the catalytic Proton acceptor. Substrate-binding positions include S180, H187, F201–S204, R209, and Y272.

This sequence belongs to the NAD(P)-dependent epimerase/dehydratase family. HldD subfamily. Homopentamer. Requires NADP(+) as cofactor.

It carries out the reaction ADP-D-glycero-beta-D-manno-heptose = ADP-L-glycero-beta-D-manno-heptose. The protein operates within nucleotide-sugar biosynthesis; ADP-L-glycero-beta-D-manno-heptose biosynthesis; ADP-L-glycero-beta-D-manno-heptose from D-glycero-beta-D-manno-heptose 7-phosphate: step 4/4. Its function is as follows. Catalyzes the interconversion between ADP-D-glycero-beta-D-manno-heptose and ADP-L-glycero-beta-D-manno-heptose via an epimerization at carbon 6 of the heptose. This Klebsiella pneumoniae (strain 342) protein is ADP-L-glycero-D-manno-heptose-6-epimerase.